Consider the following 301-residue polypeptide: D-psicose 3-epimerase (301 aa).

Y16 contributes to the substrate binding site. E162 (proton donor/acceptor) is an active-site residue. E162 is a binding site for Mn(2+). Residues E168 and 195–198 (DTFH) each bind substrate. Residues D195 and H221 each coordinate Mn(2+). R227 is a binding site for substrate. E256 acts as the Proton donor/acceptor in catalysis. E256 contacts Mn(2+).

Belongs to the hyi family. Homotetramer. Mn(2+) is required as a cofactor. Requires Co(2+) as cofactor.

The catalysed reaction is D-allulose = keto-D-fructose. With respect to regulation, completely inhibited by EDTA and partially inhibited by Zn(2+), Mg(2+) and Cu(2+). In terms of biological role, involved in the biosynthesis of D-psicose. Catalyzes the reversible epimerization of D-fructose at the C3 position to yield D-psicose. The enzyme is highly specific for D-psicose and shows very low activity with D-tagatose. The sequence is that of D-psicose 3-epimerase from Enterocloster bolteae (strain ATCC BAA-613 / DSM 15670 / CCUG 46953 / JCM 12243 / WAL 16351) (Clostridium bolteae).